The primary structure comprises 94 residues: Small ribosomal subunit protein bS6 (94 aa).

This sequence belongs to the bacterial ribosomal protein bS6 family.

Binds together with bS18 to 16S ribosomal RNA. The protein is Small ribosomal subunit protein bS6 of Desulforudis audaxviator (strain MP104C).